The following is a 571-amino-acid chain: Proline--tRNA ligase (571 aa).

This sequence belongs to the class-II aminoacyl-tRNA synthetase family. ProS type 1 subfamily. Homodimer.

It is found in the cytoplasm. It catalyses the reaction tRNA(Pro) + L-proline + ATP = L-prolyl-tRNA(Pro) + AMP + diphosphate. Catalyzes the attachment of proline to tRNA(Pro) in a two-step reaction: proline is first activated by ATP to form Pro-AMP and then transferred to the acceptor end of tRNA(Pro). As ProRS can inadvertently accommodate and process non-cognate amino acids such as alanine and cysteine, to avoid such errors it has two additional distinct editing activities against alanine. One activity is designated as 'pretransfer' editing and involves the tRNA(Pro)-independent hydrolysis of activated Ala-AMP. The other activity is designated 'posttransfer' editing and involves deacylation of mischarged Ala-tRNA(Pro). The misacylated Cys-tRNA(Pro) is not edited by ProRS. The chain is Proline--tRNA ligase from Aliivibrio salmonicida (strain LFI1238) (Vibrio salmonicida (strain LFI1238)).